Here is a 129-residue protein sequence, read N- to C-terminus: Glycine cleavage system H protein (129 aa).

The region spanning 24–106 (SYTVGISEHA…FGDGWFFRVM (83 aa)) is the Lipoyl-binding domain. K65 bears the N6-lipoyllysine mark.

The protein belongs to the GcvH family. The glycine cleavage system is composed of four proteins: P, T, L and H. Requires (R)-lipoate as cofactor.

Its function is as follows. The glycine cleavage system catalyzes the degradation of glycine. The H protein shuttles the methylamine group of glycine from the P protein to the T protein. This is Glycine cleavage system H protein from Shewanella sediminis (strain HAW-EB3).